The primary structure comprises 258 residues: Phycoerythrobilin:ferredoxin oxidoreductase (258 aa).

This sequence belongs to the HY2 family.

The catalysed reaction is (3Z)-phycoerythrobilin + oxidized 2[4Fe-4S]-[ferredoxin] = 15,16-dihydrobiliverdin + reduced 2[4Fe-4S]-[ferredoxin] + 2 H(+). Its function is as follows. Catalyzes the two-electron reduction of the C2 and C3(1) diene system of 15,16-dihydrobiliverdin. The protein is Phycoerythrobilin:ferredoxin oxidoreductase of Prochlorococcus marinus (strain NATL2A).